The following is a 420-amino-acid chain: Aminoacyltransferase FemA (420 aa).

Belongs to the FemABX family. In terms of assembly, homodimer. Interacts with FemB.

It localises to the cytoplasm. The catalysed reaction is beta-D-GlcNAc-(1-&gt;4)-Mur2Ac(oyl-L-Ala-D-isoglutaminyl-L-Lys-(N(6)-Gly)-D-Ala-D-Ala)-di-trans,octa-cis-undecaprenyl diphosphate + 2 glycyl-tRNA(Gly) = MurNAc-L-Ala-D-isoglutaminyl-L-Lys-(N(6)-tri-Gly)-D-Ala-D-Ala-diphospho-di-trans,octa-cis-undecaprenyl-GlcNAc + 2 tRNA(Gly) + 2 H(+). Catalyzes the formation of the pentaglycine interpeptide bridge, which is characteristic of the S.aureus peptidoglycan. Adds glycines 2 and 3 of the pentaglycine bridge, using glycyl-tRNA(Gly) as donor. The sequence is that of Aminoacyltransferase FemA (femA) from Staphylococcus aureus (strain bovine RF122 / ET3-1).